Consider the following 174-residue polypeptide: Trypsin inhibitor (174 aa).

Intrachain disulfides connect C40/C86 and C131/C140.

This sequence belongs to the protease inhibitor I3 (leguminous Kunitz-type inhibitor) family. As to quaternary structure, heterodimer of an alpha and a beta chain linked by a disulfide bond.

Functionally, inhibits trypsin and chymotrypsin with a 1:1 stoichiometry, with dissociation constants of 1.56 nM and 120 nM respectively. Inhibits plasma kallikrein, factor XIIa and plasmin with dissociation constants of 5.0 nM, 150 nM and 18 nM respectively. Does not inhibit factor Xa, thrombin, tissue kallikrein or cysteine proteinases such as papain and bromelain. The chain is Trypsin inhibitor from Enterolobium contortisiliquum (Pacara earpod tree).